Consider the following 453-residue polypeptide: Allantoinase (453 aa).

The Zn(2+) site is built by His-59, His-61, Lys-146, His-186, His-242, and Asp-315. Lys-146 is modified (N6-carboxylysine).

This sequence belongs to the metallo-dependent hydrolases superfamily. Allantoinase family. As to quaternary structure, homotetramer. Zn(2+) serves as cofactor. Carboxylation allows a single lysine to coordinate two zinc ions.

The enzyme catalyses (S)-allantoin + H2O = allantoate + H(+). It functions in the pathway nitrogen metabolism; (S)-allantoin degradation; allantoate from (S)-allantoin: step 1/1. Its function is as follows. Catalyzes the conversion of allantoin (5-ureidohydantoin) to allantoic acid by hydrolytic cleavage of the five-member hydantoin ring. The polypeptide is Allantoinase (Escherichia coli (strain SMS-3-5 / SECEC)).